A 382-amino-acid polypeptide reads, in one-letter code: Chaperone protein DnaJ (382 aa).

The J domain occupies 5–70; the sequence is DYYDLLGLSK…DKRAAYDRYG (66 aa). The segment at 138–216 adopts a CR-type zinc-finger fold; the sequence is GTKVPINYVT…CSGSGRVRDE (79 aa). Residues Cys-151, Cys-154, Cys-168, Cys-171, Cys-190, Cys-193, Cys-204, and Cys-207 each contribute to the Zn(2+) site. 4 CXXCXGXG motif repeats span residues 151-158, 168-175, 190-197, and 204-211; these read CSSCSGSG, CNTCHGAG, CHVCNGEG, and CKKCSGSG.

It belongs to the DnaJ family. In terms of assembly, homodimer. It depends on Zn(2+) as a cofactor.

Its subcellular location is the cytoplasm. Participates actively in the response to hyperosmotic and heat shock by preventing the aggregation of stress-denatured proteins and by disaggregating proteins, also in an autonomous, DnaK-independent fashion. Unfolded proteins bind initially to DnaJ; upon interaction with the DnaJ-bound protein, DnaK hydrolyzes its bound ATP, resulting in the formation of a stable complex. GrpE releases ADP from DnaK; ATP binding to DnaK triggers the release of the substrate protein, thus completing the reaction cycle. Several rounds of ATP-dependent interactions between DnaJ, DnaK and GrpE are required for fully efficient folding. Also involved, together with DnaK and GrpE, in the DNA replication of plasmids through activation of initiation proteins. The sequence is that of Chaperone protein DnaJ from Ehrlichia ruminantium (strain Gardel).